The following is a 265-amino-acid chain: uncharacterized protein (265 aa).

E47 is an active-site residue.

The protein belongs to the PhzF family.

This is an uncharacterized protein from Halalkalibacterium halodurans (strain ATCC BAA-125 / DSM 18197 / FERM 7344 / JCM 9153 / C-125) (Bacillus halodurans).